The chain runs to 156 residues: uncharacterized protein (156 aa).

This is an uncharacterized protein from Bacillus subtilis (strain 168).